Consider the following 421-residue polypeptide: MSRRTCSDLRRPSSCPCRLGARTTVDGCKEESPVLSVTMKCFNCNPDLSELEVVKPEDSGIEASYSPVCLEPSCNDCVRNHERLSFIDSPIVGHDNKENQRVQNTLDSSNETEELEASRLYEDSGYSSFTQSDRDDGILILENFRNSPQARLLPSQSPDQHPNKTLLPVLHFERVVCSTLKKNGKRNPKVDREMLKEVIASGNFRLQNIIGKKMGLEHLDILAELSRRGFVHLLANILTKLSGMDLVNLSKVSRIWKKILENNKGAFQLYSKTMQRVIESSKLSLHATTRGYVVGRAALTCVQKSSTWAPPKKDVQIKSSSQRGQRVSTYSRHNEFVEVAKTLKNNESLKACVRCNFPAKYDHYLERAVCKRESCQFEYCTKCLCAYHNNKDCLNGKILKASCKVGPLPGTKKSKKNLQRL.

A Phosphoserine modification is found at Ser85. An interaction with EVI5 region spans residues 114–219 (ELEASRLYED…IGKKMGLEHL (106 aa)). The F-box domain occupies 223 to 273 (AELSRRGFVHLLANILTKLSGMDLVNLSKVSRIWKKILENNKGAFQLYSKT). The interval 236–313 (NILTKLSGMD…KSSTWAPPKK (78 aa)) is sufficient for interaction with RPS6KA2; Prevents association of CDC20 with RPS6KA2. A requires for efficient binding to CDC20 region spans residues 236–383 (NILTKLSGMD…SCQFEYCTKC (148 aa)). An inhibits APC ubiquitin ligase activity region spans residues 280-421 (SSKLSLHATT…KKSKKNLQRL (142 aa)). Positions 296-299 (RAAL) are competitively blocks access of APC substrates to the D-box coreceptor formed by FZR1 and ANAPC10. Residues 348–396 (SLKACVRCNFPAKYDHYLERAVCKRESCQFEYCTKCLCAYHNNKDCLNG) form a ZBR-type zinc finger. Cys352, Cys355, Cys370, Cys375, Cys380, Cys383, His388, and Cys393 together coordinate Zn(2+). The tract at residues 352-394 (CVRCNFPAKYDHYLERAVCKRESCQFEYCTKCLCAYHNNKDCL) is allows a rapid multiple mono-ubiquitination of the APC substrate, but strongly inhibits the slow ubiquitin chain elongation catalyzed by UBCH10. The segment at 411–421 (TKKSKKNLQRL) is sufficient to suppress UBE2S activity; essential for interaction with UBE2S; competitively inhibits the rapide ubiquitin chain elongation by UBE2D1 which blocks UBE2D1 with APC; indispensable for recruitment and position of FBXO5 to the catalytic site of APC; abrogates the inhibition of ubiquitin chain assembly primarily catalyzed by UBE2S; inhibits the ubiquitination by either UBE2C or UBE2D1.

As to quaternary structure, part of a SCF (SKP1-cullin-F-box) protein ligase complex. Interacts with BTRC; mediates proteolysis by the SCF ubiquitin ligase complex leading to activation of APC in late mitosis and subsequent mitotic progression. Interacts with FZR1/CDH1 and the N-terminal substrate-binding domain of CDC20; prevents APC activation. Also interacts with EVI5 which blocks its phosphorylation by PLK1 and prevents its subsequent binding to BTRC and degradation. Interacts simultaneously with anaphase promoting complex (APC), through at least ANAPC2, CDC23, CDC27, the APC substrate GMNN and the APC activator FZR1. Interacts with UBE2S; interferes with the activity of UBE2S mainly by disrupting the dynamic electrostatic association between the C-terminal tail of UBE2S and ANAPC2. Interacts with RPS6KA2; cooperates to induce the metaphase arrest of early blastomeres; increases and stabilizes interaction of FBXO5 with CDC20. Phosphorylation by CDK2 and subsequently by PLK1 triggers degradation during early mitosis through ubiquitin-mediated proteolysis by the SCF ubiquitin ligase complex containing the F-box protein BTRC. This degradation is necessary for the activation of APC in late mitosis and subsequent mitotic progression. Phosphorylated by RPS6KA2; increases and stabilizes interaction with CDC20. In terms of processing, ubiquitinated by the SCF(BTRC) complex following phosphorylation by PLK1. Undergoes both 'Lys-11' and 'Lys-48'-linked polyubiquitination by APC-FZR1 complex leading to degradation during G1 phase by the proteasome. Degraded through the SCF(BTRC) complex; degradation occurs during oocyte maturation, between germinal vesicle breakdown (GVBD) and meiosis I, and is required for the meiosis I-meiosis II transition. In terms of tissue distribution, expressed in oocytes and granulosa cells. Expressed in proliferating cells compartments in hair follicle and skin epidermis, spermatogonia, and intestinal crypts.

It is found in the nucleus. The protein localises to the cytoplasm. It localises to the cytoskeleton. The protein resides in the spindle. The protein operates within protein modification; protein ubiquitination. Regulator of APC activity during mitotic and meiotic cell cycle. During mitotic cell cycle plays a role as both substrate and inhibitor of APC-FZR1 complex. During G1 phase, plays a role as substrate of APC-FZR1 complex E3 ligase. Then switches as an inhibitor of APC-FZR1 complex during S and G2 leading to cell-cycle commitment. As APC inhibitor, prevents the degradation of APC substrates at multiple levels: by interacting with APC and blocking access of APC substrates to the D-box co-receptor, formed by FZR1 and ANAPC10; by suppressing ubiquitin ligation and chain elongation by APC by preventing the UBE2C and UBE2S activities. Plays a role in genome integrity preservation by coordinating DNA replication with mitosis through APC inhibition in interphase to stabilize CCNA2 and GMNN in order to promote mitosis and prevent rereplication and DNA damage-induced cellular senescence. During oocyte maturation, plays a role in meiosis through inactivation of APC-FZR1 complex. Inhibits APC through RPS6KA2 interaction that increases FBXO5 affiniy for CDC20 leading to the metaphase arrest of the second meiotic division before fertilization. Controls entry into the first meiotic division through inactivation of APC-FZR1 complex. Promotes migration and osteogenic differentiation of mesenchymal stem cells. The chain is F-box only protein 5 from Mus musculus (Mouse).